A 399-amino-acid polypeptide reads, in one-letter code: Chalcone synthase 2 (399 aa).

Residue C166 is part of the active site.

The protein belongs to the thiolase-like superfamily. Chalcone/stilbene synthases family.

It carries out the reaction (E)-4-coumaroyl-CoA + 3 malonyl-CoA + 3 H(+) = 2',4,4',6'-tetrahydroxychalcone + 3 CO2 + 4 CoA. The protein operates within secondary metabolite biosynthesis; flavonoid biosynthesis. In terms of biological role, the primary product of this enzyme is 4,2',4',6'-tetrahydroxychalcone (also termed naringenin-chalcone or chalcone) which can under specific conditions spontaneously isomerize into naringenin. Substrate preference is feruloyl-CoA = caffeoyl-CoA &gt;&gt; cinnamoyl-CoA. The protein is Chalcone synthase 2 (CHS2) of Hordeum vulgare (Barley).